A 349-amino-acid polypeptide reads, in one-letter code: 5-deoxyribose 1-phosphate isomerase (349 aa).

Residues 49-51 (RGA), arginine 92, and glutamine 199 each bind substrate. Aspartate 240 functions as the Proton donor in the catalytic mechanism. 250-251 (NK) lines the substrate pocket.

This sequence belongs to the EIF-2B alpha/beta/delta subunits family. DrdI subfamily.

It carries out the reaction 5-deoxy-alpha-D-ribose 1-phosphate = 5-deoxy-D-ribulose 1-phosphate. It participates in carbohydrate degradation. Its function is as follows. Catalyzes the isomerization of 5-deoxy-alpha-D-ribose 1-phosphate to 5-deoxy-D-ribulose 1-phosphate, as part of a 5-deoxyribose salvage pathway that recycles this toxic radical SAM enzyme by-product to mainstream metabolites. In Clostridium botulinum (strain 657 / Type Ba4), this protein is 5-deoxyribose 1-phosphate isomerase.